The chain runs to 233 residues: Adenosine 5'-phosphosulfate reductase (233 aa).

Residues Cys120, Cys121, Cys203, and Cys206 each coordinate [4Fe-4S] cluster. The active-site Nucleophile; cysteine thiosulfonate intermediate is the Cys229.

This sequence belongs to the PAPS reductase family. CysH subfamily. [4Fe-4S] cluster is required as a cofactor.

It is found in the cytoplasm. The enzyme catalyses [thioredoxin]-disulfide + sulfite + AMP + 2 H(+) = adenosine 5'-phosphosulfate + [thioredoxin]-dithiol. It participates in sulfur metabolism; hydrogen sulfide biosynthesis; sulfite from sulfate. Its function is as follows. Catalyzes the formation of sulfite from adenosine 5'-phosphosulfate (APS) using thioredoxin as an electron donor. The protein is Adenosine 5'-phosphosulfate reductase of Bacillus pumilus (strain SAFR-032).